Consider the following 135-residue polypeptide: uncharacterized protein (135 aa).

Helical transmembrane passes span 11-31 (ILFF…GYLI) and 57-77 (LGTA…TDAI).

It is found in the cell membrane. This is an uncharacterized protein from Methanocaldococcus jannaschii (strain ATCC 43067 / DSM 2661 / JAL-1 / JCM 10045 / NBRC 100440) (Methanococcus jannaschii).